Here is a 297-residue protein sequence, read N- to C-terminus: MEDIANPERTKKILKRYGFKFKKSLGQNFLTNITILKQIVEAGEITKDDDVIEIGPGIGSLTEQIARKAHQVLSFEIDDRLIPVLKDTLNHYHNVTVLNQDILEADLPTLIAKHFDGQHNLKIVANLPYYITTPIMLHLLEAGLPIDRMVLMMQKEVAERIDAAPGSKAYGSLSIAVQLHSEVKLAFIVPKTAFVPQPNVDSAIVEFVGRQEPLVTVQNQQLFDQLVRGAFAQRRKTLWNNLQNQFGKQEEVKAGLVAALDQADIAPSTRAEQLSIQQFAQLSDCLNEQPVFAKKRG.

S-adenosyl-L-methionine is bound by residues N28, L30, G55, E76, D101, and N126.

It belongs to the class I-like SAM-binding methyltransferase superfamily. rRNA adenine N(6)-methyltransferase family. RsmA subfamily.

The protein resides in the cytoplasm. It catalyses the reaction adenosine(1518)/adenosine(1519) in 16S rRNA + 4 S-adenosyl-L-methionine = N(6)-dimethyladenosine(1518)/N(6)-dimethyladenosine(1519) in 16S rRNA + 4 S-adenosyl-L-homocysteine + 4 H(+). Its function is as follows. Specifically dimethylates two adjacent adenosines (A1518 and A1519) in the loop of a conserved hairpin near the 3'-end of 16S rRNA in the 30S particle. May play a critical role in biogenesis of 30S subunits. This is Ribosomal RNA small subunit methyltransferase A from Latilactobacillus sakei subsp. sakei (strain 23K) (Lactobacillus sakei subsp. sakei).